The primary structure comprises 403 residues: Argininosuccinate synthase (403 aa).

ATP contacts are provided by residues 12-20 and A39; that span reads AYSGGLDTS. 2 residues coordinate L-citrulline: Y90 and S95. ATP is bound at residue G120. Positions 122, 126, and 127 each coordinate L-aspartate. N126 is a binding site for L-citrulline. 5 residues coordinate L-citrulline: R130, S182, S191, E267, and Y279.

This sequence belongs to the argininosuccinate synthase family. Type 1 subfamily. Homotetramer.

The protein resides in the cytoplasm. It catalyses the reaction L-citrulline + L-aspartate + ATP = 2-(N(omega)-L-arginino)succinate + AMP + diphosphate + H(+). Its pathway is amino-acid biosynthesis; L-arginine biosynthesis; L-arginine from L-ornithine and carbamoyl phosphate: step 2/3. This chain is Argininosuccinate synthase, found in Vesicomyosocius okutanii subsp. Calyptogena okutanii (strain HA).